The sequence spans 223 residues: AN1-type zinc finger protein 6 (223 aa).

The segment at 8 to 42 (SQAPMLCSTGCGFYGNPRTNGMCSVCYKEHLQRQN) adopts an A20-type zinc-finger fold. Zn(2+)-binding residues include cysteine 14, cysteine 18, cysteine 30, and cysteine 33. A disordered region spans residues 41 to 155 (QNSSNGRISP…PSEEQSKSLE (115 aa)). Serine 49 carries the post-translational modification Phosphoserine. Polar residues-rich tracts occupy residues 77 to 110 (ALDSTSSSMQPGPVSNQSLLSESVAPSQVDSTSV) and 137 to 148 (SSVSDTTQQPSE). An AN1-type zinc finger spans residues 158-204 (KQKKNRCFMCRKKVGLTGFECRCGNVYCGVHRYSDVHNCSYNYKADA). The Zn(2+) site is built by cysteine 164, cysteine 167, cysteine 178, cysteine 180, cysteine 185, histidine 188, histidine 194, and cysteine 196. Lysine 219 bears the N6-acetyllysine mark.

In terms of assembly, interacts with PKN1. Interacts with TRAF2. Interacts with mono- and polyubiquitin. Interacts with PEX6. Interacts with PEX5 (Cys-linked ubiquitinated).

It localises to the cytoplasm. Involved in regulation of TNF-alpha induced NF-kappa-B activation and apoptosis. Involved in modulation of 'Lys-48'-linked polyubiquitination status of TRAF2 and decreases association of TRAF2 with RIPK1. Required for PTS1 target sequence-dependent protein import into peroxisomes and PEX5 stability; may cooperate with PEX6. In vitro involved in PEX5 export from the cytosol to peroxisomes. The protein is AN1-type zinc finger protein 6 (Zfand6) of Mus musculus (Mouse).